The primary structure comprises 149 residues: Calmodulin-2 (149 aa).

N-acetylalanine is present on Ala-2. 4 EF-hand domains span residues 8–43 (EQIA…LGQN), 44–79 (PTEA…KMKD), 81–116 (DSEE…LGEK), and 117–149 (LTDE…MTSK). Ca(2+) contacts are provided by Asp-21, Asp-23, Asp-25, Thr-27, Glu-32, Asp-57, Asp-59, Asn-61, Thr-63, Glu-68, Asp-94, Asp-96, Asn-98, and Glu-105. Position 116 is an N6,N6,N6-trimethyllysine (Lys-116). Asp-130, Asp-132, Asp-134, Gln-136, and Glu-141 together coordinate Ca(2+).

This sequence belongs to the calmodulin family.

In terms of biological role, calmodulin mediates the control of a large number of enzymes, ion channels and other proteins by Ca(2+). Among the enzymes to be stimulated by the calmodulin-Ca(2+) complex are a number of protein kinases and phosphatases. The chain is Calmodulin-2 (CAM2) from Branchiostoma lanceolatum (Common lancelet).